Consider the following 548-residue polypeptide: Probable nuclear hormone receptor HR3 (548 aa).

Positions 1 to 27 are disordered; that stretch reads MNNNQFHELFGSQWPPDQHGGHSSAST. The segment at residues 101–176 is a DNA-binding region (nuclear receptor); that stretch reads IIPCKVCGDK…LGMSRDAVKF (76 aa). NR C4-type zinc fingers lie at residues 104 to 124 and 140 to 164; these read CKVCGDKSSGVHYGVITCEGC and CPRNKACVVDRVNRNRCQYCRLQKC. Residues 198-228 form a disordered region; it reads MRAQNDAAPDSVYDAQQQTPSSSDQFHGHYN. The segment covering 211–222 has biased composition (polar residues); the sequence is DAQQQTPSSSDQ. The NR LBD domain occupies 295 to 539; sequence ISKVLVKSLA…PALYKELFSL (245 aa).

This sequence belongs to the nuclear hormone receptor family. NR1 subfamily.

The protein resides in the nucleus. In terms of biological role, putative receptor whose ligand is not yet known. This is Probable nuclear hormone receptor HR3 (HR3) from Manduca sexta (Tobacco hawkmoth).